An 830-amino-acid polypeptide reads, in one-letter code: Leucine--tRNA ligase (830 aa).

The short motif at 48-58 (PYPSGAIHMGH) is the 'HIGH' region element. Positions 596–600 (KMSKS) match the 'KMSKS' region motif. Lys-599 contacts ATP.

Belongs to the class-I aminoacyl-tRNA synthetase family.

The protein localises to the cytoplasm. It carries out the reaction tRNA(Leu) + L-leucine + ATP = L-leucyl-tRNA(Leu) + AMP + diphosphate. The protein is Leucine--tRNA ligase of Helicobacter hepaticus (strain ATCC 51449 / 3B1).